The following is a 333-amino-acid chain: MTKTIIDQAGATPGAIRTREGLVSAYRTELAIAGAIVLLVLAVGTQVPQAMSWGNFANITQAGAPLIIMSLGVLLVVITGGIDLSVGSVFSLTGMVTAQAMASGLDVSAALIGLGVGLVFGSINGFLVTVAGLAPFVVTLITFAVAGSLAFIVTNGRSMPIGDPDFWLLNSGSLIPGVPNYILFCIVLLVVIEIFLKKMVAGRWFYAVGSSAAAARLLGIPVKRTQFFAYVASSLLASFSGLLTISYILNAESTAGSSLMLQAIAAVVIGGASLLGGTGTAVGAVLGALMITVIQNGVNLIGINSFWQGSVTGLAILIAVLIDRFSKSRRGAV.

The next 10 membrane-spanning stretches (helical) occupy residues 30–50 (LAIAGAIVLLVLAVGTQVPQA), 62–82 (AGAPLIIMSLGVLLVVITGGI), 84–104 (LSVGSVFSLTGMVTAQAMASG), 110–130 (ALIGLGVGLVFGSINGFLVTV), 133–153 (LAPFVVTLITFAVAGSLAFIV), 175–195 (IPGVPNYILFCIVLLVVIEIF), 228–248 (FAYVASSLLASFSGLLTISYI), 253–273 (STAGSSLMLQAIAAVVIGGAS), 274–294 (LLGGTGTAVGAVLGALMITVI), and 300–320 (LIGINSFWQGSVTGLAILIAV).

The protein belongs to the binding-protein-dependent transport system permease family. AraH/RbsC subfamily.

The protein localises to the cell inner membrane. Functionally, probably part of the binding-protein-dependent transport system y4mIJK. This system probably transports a sugar. Probably responsible for the translocation of the substrate across the membrane. The sequence is that of Probable ABC transporter permease protein y4mJ from Sinorhizobium fredii (strain NBRC 101917 / NGR234).